A 468-amino-acid polypeptide reads, in one-letter code: Cysteine--tRNA ligase (468 aa).

Position 33 (Cys33) interacts with Zn(2+). The 'HIGH' region signature appears at 35-45 (ATVQGLPHIGH). Residues Cys211, His236, and Glu240 each coordinate Zn(2+). The short motif at 267-271 (KMSKS) is the 'KMSKS' region element. Lys270 contacts ATP.

The protein belongs to the class-I aminoacyl-tRNA synthetase family. As to quaternary structure, monomer. The cofactor is Zn(2+).

The protein resides in the cytoplasm. It catalyses the reaction tRNA(Cys) + L-cysteine + ATP = L-cysteinyl-tRNA(Cys) + AMP + diphosphate. This Mycobacterium ulcerans (strain Agy99) protein is Cysteine--tRNA ligase.